A 428-amino-acid polypeptide reads, in one-letter code: Flap endonuclease 1-B (428 aa).

The interval 1–132 is N-domain; sequence MGIKGLTKVL…KELAKRSLKR (132 aa). Asp-34 serves as a coordination point for Mg(2+). Position 98 (Arg-98) interacts with DNA. Residues Asp-114, Glu-186, Glu-188, Asp-207, and Asp-209 each contribute to the Mg(2+) site. The interval 150 to 281 is I-domain; sequence AVEKFSKRTV…QRALKLIRQH (132 aa). Glu-186 provides a ligand contact to DNA. Residues Gly-259 and Asp-261 each contribute to the DNA site. Asp-261 is a binding site for Mg(2+).

It belongs to the XPG/RAD2 endonuclease family. FEN1 subfamily. As to quaternary structure, interacts with PCNA. Three molecules of FEN1 bind to one PCNA trimer with each molecule binding to one PCNA monomer. PCNA stimulates the nuclease activity without altering cleavage specificity. Mg(2+) is required as a cofactor. Phosphorylated. Phosphorylation upon DNA damage induces relocalization to the nuclear plasma.

It is found in the nucleus. The protein localises to the nucleolus. Its subcellular location is the nucleoplasm. The protein resides in the mitochondrion. Structure-specific nuclease with 5'-flap endonuclease and 5'-3' exonuclease activities involved in DNA replication and repair. During DNA replication, cleaves the 5'-overhanging flap structure that is generated by displacement synthesis when DNA polymerase encounters the 5'-end of a downstream Okazaki fragment. It enters the flap from the 5'-end and then tracks to cleave the flap base, leaving a nick for ligation. Also involved in the long patch base excision repair (LP-BER) pathway, by cleaving within the apurinic/apyrimidinic (AP) site-terminated flap. Acts as a genome stabilization factor that prevents flaps from equilibrating into structures that lead to duplications and deletions. Also possesses 5'-3' exonuclease activity on nicked or gapped double-stranded DNA, and exhibits RNase H activity. Also involved in replication and repair of rDNA and in repairing mitochondrial DNA. The protein is Flap endonuclease 1-B of Sorghum bicolor (Sorghum).